The following is a 92-amino-acid chain: Small ribosomal subunit protein uS19 (92 aa).

This sequence belongs to the universal ribosomal protein uS19 family.

In terms of biological role, protein S19 forms a complex with S13 that binds strongly to the 16S ribosomal RNA. In Lysinibacillus sphaericus (strain C3-41), this protein is Small ribosomal subunit protein uS19.